Consider the following 338-residue polypeptide: Probable tRNA pseudouridine synthase B (338 aa).

The Nucleophile role is filled by D78. Residues 245–320 form the PUA domain; the sequence is LPKIILRDSA…IAASPIRVLM (76 aa).

It belongs to the pseudouridine synthase TruB family. Type 2 subfamily.

It carries out the reaction uridine(55) in tRNA = pseudouridine(55) in tRNA. Functionally, could be responsible for synthesis of pseudouridine from uracil-55 in the psi GC loop of transfer RNAs. In Methanosarcina mazei (strain ATCC BAA-159 / DSM 3647 / Goe1 / Go1 / JCM 11833 / OCM 88) (Methanosarcina frisia), this protein is Probable tRNA pseudouridine synthase B.